A 555-amino-acid polypeptide reads, in one-letter code: Glypican-6 (555 aa).

The signal sequence occupies residues 1–23; sequence MPSWIGAVILPLLGLLLSLPAGA. A compositionally biased stretch (low complexity) spans 348 to 357; the sequence is PALRSARSAP. Disordered regions lie at residues 348-376 and 480-501; these read PALRSARSAPENFNTRFRPYNPEERPTTA and GNDVNFQDTSDESSGSGSGSGC. The GPI-anchor amidated serine moiety is linked to residue serine 529. Residues 530-555 constitute a propeptide, removed in mature form; sequence SAAQRGHSLLSWSLTCIVLALQRLCR.

The protein belongs to the glypican family. As to expression, widely expressed. High expression in fetal kidney and lung and lower expressions in fetal liver and brain. In adult tissues, very abundant in ovary, high levels also observed in liver, kidney, small intestine and colon. Not detected in peripheral blood leukocytes. Detected in breast cancer cells (at protein level).

It localises to the cell membrane. Its subcellular location is the secreted. It is found in the extracellular space. Its function is as follows. Cell surface proteoglycan that bears heparan sulfate. Putative cell surface coreceptor for growth factors, extracellular matrix proteins, proteases and anti-proteases. Enhances migration and invasion of cancer cells through WNT5A signaling. This chain is Glypican-6 (GPC6), found in Homo sapiens (Human).